A 431-amino-acid polypeptide reads, in one-letter code: Xaa-Arg dipeptidase (431 aa).

The protein belongs to the peptidase M20A family.

The catalysed reaction is beta-alanyl-L-lysine + H2O = beta-alanine + L-lysine. It catalyses the reaction beta-alanyl-L-arginine + H2O = beta-alanine + L-arginine. The enzyme catalyses beta-alanyl-L-ornithine + H2O = beta-alanine + L-ornithine. It carries out the reaction N(2)-(4-aminobutanoyl)-L-lysine + H2O = 4-aminobutanoate + L-lysine. The catalysed reaction is N(2)-(4-aminobutanoyl)-L-arginine + H2O = 4-aminobutanoate + L-arginine. It catalyses the reaction N(2)-(4-aminobutanoyl)-L-ornithine + H2O = 4-aminobutanoate + L-ornithine. Functionally, catalyzes the peptide bond hydrolysis in dipeptides having basic amino acids lysine, ornithine or arginine at C-terminus. Postulated to function in a metabolite repair mechanism by eliminating alternate dipeptide by-products formed during carnosine synthesis. The sequence is that of Xaa-Arg dipeptidase from Mus musculus (Mouse).